A 957-amino-acid chain; its full sequence is Glycine dehydrogenase (decarboxylating) (957 aa).

At Lys708 the chain carries N6-(pyridoxal phosphate)lysine.

It belongs to the GcvP family. As to quaternary structure, the glycine cleavage system is composed of four proteins: P, T, L and H. Pyridoxal 5'-phosphate serves as cofactor.

It carries out the reaction N(6)-[(R)-lipoyl]-L-lysyl-[glycine-cleavage complex H protein] + glycine + H(+) = N(6)-[(R)-S(8)-aminomethyldihydrolipoyl]-L-lysyl-[glycine-cleavage complex H protein] + CO2. The glycine cleavage system catalyzes the degradation of glycine. The P protein binds the alpha-amino group of glycine through its pyridoxal phosphate cofactor; CO(2) is released and the remaining methylamine moiety is then transferred to the lipoamide cofactor of the H protein. The sequence is that of Glycine dehydrogenase (decarboxylating) from Escherichia coli O157:H7.